Reading from the N-terminus, the 297-residue chain is D-alanine--D-alanine ligase (297 aa).

Residues 95-294 (KMLWKAFGLP…FEQLVVKILE (200 aa)) enclose the ATP-grasp domain. 125 to 180 (VAKLGLPLMVKPSLEGSSVGLTKVKAVEELKSAVEYALKFDNTILIEEWLAGDELT) serves as a coordination point for ATP. Mg(2+) is bound by residues aspartate 248, glutamate 261, and asparagine 263.

It belongs to the D-alanine--D-alanine ligase family. Mg(2+) serves as cofactor. Mn(2+) is required as a cofactor.

The protein resides in the cytoplasm. It carries out the reaction 2 D-alanine + ATP = D-alanyl-D-alanine + ADP + phosphate + H(+). Its pathway is cell wall biogenesis; peptidoglycan biosynthesis. Its function is as follows. Cell wall formation. This Haemophilus influenzae (strain PittEE) protein is D-alanine--D-alanine ligase.